Consider the following 463-residue polypeptide: MDYLPLFHKLQGGRALVVGGGEIALRKARLLADAGAALRVVAPEVDGQLAALAREGGGEVLVRGYQSSDLDGCRLVIAATDDPGLNAQVSAHAQARSLPVNVVDAPALCTVIFPAIVDRSPLVVAVSSGGDAPVLARLIRAKLEAWIPSAYGELAGLAARFRDKVKALYPDVNQRRGFWENVFQGPIAERQLAGQGAEAERLLQAMVDGAPVQQGGEVYLVGAGPGDPDLLTFRALRLMQQADVVLYDRLVAPAIIEMCRRDAERIYVGKRRADHAVPQDQINRLLVDLARQGKRVLRLKGGDPFIFGRGGEEIEELADEGIPFQVVPGITAASGCSAYGGIPLTHRDYAQSVRFVTGHLKDGTSNLPWNDLVAPAQTLVFYMGLVGLPTICAELIRHGRAASTPAALVQQGTTRNQRVFTGTLADLPELVARHEVHAPTLVIVGEVVKLRDKLAWFEGAQNS.

The segment at 1 to 203 (MDYLPLFHKL…GQGAEAERLL (203 aa)) is precorrin-2 dehydrogenase /sirohydrochlorin ferrochelatase. NAD(+) contacts are provided by residues 22-23 (EI) and 43-44 (PE). Residue Ser-128 is modified to Phosphoserine. Positions 216-463 (GEVYLVGAGP…LAWFEGAQNS (248 aa)) are uroporphyrinogen-III C-methyltransferase. Pro-225 lines the S-adenosyl-L-methionine pocket. The Proton acceptor role is filled by Asp-248. The Proton donor role is filled by Lys-270. S-adenosyl-L-methionine is bound by residues 301-303 (GGD), Ile-306, 331-332 (TA), Met-383, and Gly-412.

It in the N-terminal section; belongs to the precorrin-2 dehydrogenase / sirohydrochlorin ferrochelatase family. The protein in the C-terminal section; belongs to the precorrin methyltransferase family.

It catalyses the reaction uroporphyrinogen III + 2 S-adenosyl-L-methionine = precorrin-2 + 2 S-adenosyl-L-homocysteine + H(+). It carries out the reaction precorrin-2 + NAD(+) = sirohydrochlorin + NADH + 2 H(+). The catalysed reaction is siroheme + 2 H(+) = sirohydrochlorin + Fe(2+). It functions in the pathway cofactor biosynthesis; adenosylcobalamin biosynthesis; precorrin-2 from uroporphyrinogen III: step 1/1. The protein operates within cofactor biosynthesis; adenosylcobalamin biosynthesis; sirohydrochlorin from precorrin-2: step 1/1. Its pathway is porphyrin-containing compound metabolism; siroheme biosynthesis; precorrin-2 from uroporphyrinogen III: step 1/1. It participates in porphyrin-containing compound metabolism; siroheme biosynthesis; siroheme from sirohydrochlorin: step 1/1. It functions in the pathway porphyrin-containing compound metabolism; siroheme biosynthesis; sirohydrochlorin from precorrin-2: step 1/1. Its function is as follows. Multifunctional enzyme that catalyzes the SAM-dependent methylations of uroporphyrinogen III at position C-2 and C-7 to form precorrin-2 via precorrin-1. Then it catalyzes the NAD-dependent ring dehydrogenation of precorrin-2 to yield sirohydrochlorin. Finally, it catalyzes the ferrochelation of sirohydrochlorin to yield siroheme. The chain is Siroheme synthase from Pseudomonas entomophila (strain L48).